The following is a 601-amino-acid chain: Elongation factor 4 (601 aa).

One can recognise a tr-type G domain in the interval 5 to 187; it reads ENIRNFCIIA…AIVHHLPAPK (183 aa). GTP is bound by residues 17-22 and 134-137; these read DHGKST and NKID.

Belongs to the TRAFAC class translation factor GTPase superfamily. Classic translation factor GTPase family. LepA subfamily.

The protein localises to the cell inner membrane. It catalyses the reaction GTP + H2O = GDP + phosphate + H(+). In terms of biological role, required for accurate and efficient protein synthesis under certain stress conditions. May act as a fidelity factor of the translation reaction, by catalyzing a one-codon backward translocation of tRNAs on improperly translocated ribosomes. Back-translocation proceeds from a post-translocation (POST) complex to a pre-translocation (PRE) complex, thus giving elongation factor G a second chance to translocate the tRNAs correctly. Binds to ribosomes in a GTP-dependent manner. In Desulfovibrio desulfuricans (strain ATCC 27774 / DSM 6949 / MB), this protein is Elongation factor 4.